We begin with the raw amino-acid sequence, 198 residues long: Recombination protein RecR (198 aa).

The C4-type zinc-finger motif lies at 57 to 72 (CSICGNLTDDDPCHIC). Positions 80 to 175 (ETILVVEASK…KVTRLARGLA (96 aa)) constitute a Toprim domain.

It belongs to the RecR family.

In terms of biological role, may play a role in DNA repair. It seems to be involved in an RecBC-independent recombinational process of DNA repair. It may act with RecF and RecO. The polypeptide is Recombination protein RecR (Streptococcus equi subsp. zooepidemicus (strain MGCS10565)).